The sequence spans 780 residues: 5-methyltetrahydropteroyltriglutamate--homocysteine methyltransferase (780 aa).

5-methyltetrahydropteroyltri-L-glutamate is bound by residues 15 to 18 and Lys-114; that span reads RELK. L-homocysteine is bound by residues 457-459 and Glu-510; that span reads IGS. L-methionine-binding positions include 457–459 and Glu-510; that span reads IGS. Residues 541 to 542 and Trp-587 each bind 5-methyltetrahydropteroyltri-L-glutamate; that span reads RC. Asp-625 serves as a coordination point for L-homocysteine. Asp-625 contacts L-methionine. Residue Glu-631 participates in 5-methyltetrahydropteroyltri-L-glutamate binding. Zn(2+) contacts are provided by His-667, Cys-669, and Glu-691. His-720 (proton donor) is an active-site residue. Cys-752 serves as a coordination point for Zn(2+).

This sequence belongs to the vitamin-B12 independent methionine synthase family. Zn(2+) is required as a cofactor.

It catalyses the reaction 5-methyltetrahydropteroyltri-L-glutamate + L-homocysteine = tetrahydropteroyltri-L-glutamate + L-methionine. The protein operates within amino-acid biosynthesis; L-methionine biosynthesis via de novo pathway; L-methionine from L-homocysteine (MetE route): step 1/1. Catalyzes the transfer of a methyl group from 5-methyltetrahydrofolate to homocysteine resulting in methionine formation. This is 5-methyltetrahydropteroyltriglutamate--homocysteine methyltransferase from Nitratidesulfovibrio vulgaris (strain DSM 19637 / Miyazaki F) (Desulfovibrio vulgaris).